The sequence spans 469 residues: Argininosuccinate lyase (469 aa).

The protein belongs to the lyase 1 family. Argininosuccinate lyase subfamily.

The protein localises to the cytoplasm. It carries out the reaction 2-(N(omega)-L-arginino)succinate = fumarate + L-arginine. Its pathway is amino-acid biosynthesis; L-arginine biosynthesis; L-arginine from L-ornithine and carbamoyl phosphate: step 3/3. The sequence is that of Argininosuccinate lyase from Saccharophagus degradans (strain 2-40 / ATCC 43961 / DSM 17024).